The primary structure comprises 207 residues: 2,3-bisphosphoglycerate-dependent phosphoglycerate mutase (207 aa).

Residues Arg9–Asn16, Thr22–Gly23, Arg61, Glu88–Tyr91, Lys99, Arg115–Arg116, and Gly159–Asn160 each bind substrate. Catalysis depends on His10, which acts as the Tele-phosphohistidine intermediate. Glu88 serves as the catalytic Proton donor/acceptor.

The protein belongs to the phosphoglycerate mutase family. BPG-dependent PGAM subfamily. Homodimer.

The enzyme catalyses (2R)-2-phosphoglycerate = (2R)-3-phosphoglycerate. It participates in carbohydrate degradation; glycolysis; pyruvate from D-glyceraldehyde 3-phosphate: step 3/5. Its function is as follows. Catalyzes the interconversion of 2-phosphoglycerate and 3-phosphoglycerate. The protein is 2,3-bisphosphoglycerate-dependent phosphoglycerate mutase of Beijerinckia indica subsp. indica (strain ATCC 9039 / DSM 1715 / NCIMB 8712).